The chain runs to 753 residues: Catalase-peroxidase (753 aa).

The signal sequence occupies residues 1–39; it reads MLPRVNKRSNCIAKKTSNRLISAVSLAIASLCISQSALA. The tryptophyl-tyrosyl-methioninium (Trp-Tyr) (with M-267) cross-link spans 118–241; sequence WHSTGTYRMS…LAAVQMGLIY (124 aa). The active-site Proton acceptor is histidine 119. The segment at residues 241–267 is a cross-link (tryptophyl-tyrosyl-methioninium (Tyr-Met) (with W-118)); that stretch reads YVNPEGPNGNHDPISAAADIRDVFARM. Histidine 282 contacts heme b.

It belongs to the peroxidase family. Peroxidase/catalase subfamily. As to quaternary structure, homodimer or homotetramer. It depends on heme b as a cofactor. In terms of processing, formation of the three residue Trp-Tyr-Met cross-link is important for the catalase, but not the peroxidase activity of the enzyme.

The catalysed reaction is H2O2 + AH2 = A + 2 H2O. It catalyses the reaction 2 H2O2 = O2 + 2 H2O. Bifunctional enzyme with both catalase and broad-spectrum peroxidase activity. This Pseudoalteromonas atlantica (strain T6c / ATCC BAA-1087) protein is Catalase-peroxidase.